The chain runs to 106 residues: Putative double-stranded DNA mimic protein VV1228 (106 aa).

The protein belongs to the putative dsDNA mimic protein family.

Functionally, may act as a double-stranded DNA (dsDNA) mimic. Probably regulates the activity of a dsDNA-binding protein. In Vibrio vulnificus (strain YJ016), this protein is Putative double-stranded DNA mimic protein VV1228.